Reading from the N-terminus, the 281-residue chain is NADPH-dependent 7-cyano-7-deazaguanine reductase (281 aa).

87–89 (IES) is a binding site for substrate. 89-90 (SK) is a binding site for NADPH. Cysteine 188 acts as the Thioimide intermediate in catalysis. Aspartate 195 acts as the Proton donor in catalysis. 227-228 (HE) provides a ligand contact to substrate. Residue 256–257 (RG) coordinates NADPH.

Belongs to the GTP cyclohydrolase I family. QueF type 2 subfamily. Homodimer.

Its subcellular location is the cytoplasm. It catalyses the reaction 7-aminomethyl-7-carbaguanine + 2 NADP(+) = 7-cyano-7-deazaguanine + 2 NADPH + 3 H(+). It functions in the pathway tRNA modification; tRNA-queuosine biosynthesis. Functionally, catalyzes the NADPH-dependent reduction of 7-cyano-7-deazaguanine (preQ0) to 7-aminomethyl-7-deazaguanine (preQ1). The sequence is that of NADPH-dependent 7-cyano-7-deazaguanine reductase from Photobacterium profundum (strain SS9).